The sequence spans 91 residues: Potassium channel toxin TdiKIK (91 aa).

Residues Met-1–Ala-25 form the signal peptide. Residues Gly-26–Glu-44 constitute a propeptide that is removed on maturation. The BetaSPN-type CS-alpha/beta domain maps to Glu-58–Ser-91. Intrachain disulfides connect Cys-61/Cys-81, Cys-68/Cys-86, and Cys-72/Cys-88.

In terms of tissue distribution, expressed by the venom gland.

The protein resides in the secreted. Its function is as follows. The full peptide presents antibacterial and cytotoxic activities. The synthetic C-terminus (AA 33-76) inhibits voltage-gated potassium channels Kv1.1/KCNA1, Kv1.2/KCNA2, and Kv1.3/KCNA3. The sequence is that of Potassium channel toxin TdiKIK from Tityus discrepans (Venezuelan scorpion).